Here is a 245-residue protein sequence, read N- to C-terminus: MTSPATLVLIPARMAATRLPGKPLLDIAGLPMVVQVLRRAQAAEIGRVAVATDAPEIAAAVTAHGGEVVMTRADHPSGSDRIFEALQTLDPDRKIETVINLQGDFPTIRPEQIGAVLGPLADPAVDIATLAAEIHTEEEATNPNVVKVIGSPLAADRLRALYFTRATAPWGDGPRYHHIGLYGYRRAALERFVALPPSPLELREKLEQLRALEAGMRIDVGIVDTVPRGVDTPADLETARRVLGG.

The protein belongs to the KdsB family.

Its subcellular location is the cytoplasm. It carries out the reaction 3-deoxy-alpha-D-manno-oct-2-ulosonate + CTP = CMP-3-deoxy-beta-D-manno-octulosonate + diphosphate. Its pathway is nucleotide-sugar biosynthesis; CMP-3-deoxy-D-manno-octulosonate biosynthesis; CMP-3-deoxy-D-manno-octulosonate from 3-deoxy-D-manno-octulosonate and CTP: step 1/1. It functions in the pathway bacterial outer membrane biogenesis; lipopolysaccharide biosynthesis. In terms of biological role, activates KDO (a required 8-carbon sugar) for incorporation into bacterial lipopolysaccharide in Gram-negative bacteria. The sequence is that of 3-deoxy-manno-octulosonate cytidylyltransferase from Rhodopseudomonas palustris (strain TIE-1).